The sequence spans 2377 residues: Serine/threonine-protein kinase WNK1 (2377 aa).

2 disordered regions span residues 1-79 (MSDG…RFFR) and 93-203 (LPGL…QQDD). Phosphothreonine is present on residues Thr-17 and Thr-58. Basic and acidic residues predominate over residues 48-64 (RTEEYRRRRHTMDKDSR). Composition is skewed to low complexity over residues 101–111 (PQPSVPAVVPQ) and 127–141 (VASQ…AASP). A compositionally biased stretch (polar residues) spans 149–158 (SATTTVPSST). Phosphoserine occurs at positions 165 and 172. A Protein kinase domain is found at 221–479 (LKFDIEIGRG…IKDLLNHAFF (259 aa)). Ser-231 serves as a coordination point for ATP. Residues Phe-283 and Leu-299 each coordinate chloride. Residues 301 to 304 (TELM) and Lys-351 contribute to the ATP site. Asp-368 acts as the Proton acceptor in catalysis. Chloride contacts are provided by Leu-369 and Leu-371. 2 positions are modified to phosphoserine; by autocatalysis: Ser-378 and Ser-382. Positions 488-555 (ELAEEDDGEK…VCEGDHKTMA (68 aa)) are autoinhibitory domain. Positions 573–588 (QLVREEQEKRKQEESS) are enriched in basic and acidic residues. Disordered stretches follow at residues 573–782 (QLVR…SAGT) and 1013–1114 (PAVS…SRPK). Polar residues-rich tracts occupy residues 593–628 (NEQQ…STQV), 638–705 (HQQL…QSQP), and 713–733 (SMAQ…VLSS). An interaction with KLHL3 region spans residues 629-639 (EPEEPEADQHQ). Residues 734 to 746 (QPIQHPQQQGIQP) are compositionally biased toward low complexity. Polar residues predominate over residues 747–782 (TVPSQQAVQYSLPQAASSSEGTTAQPVSQPQVSAGT). The segment covering 1018-1028 (TQQPPTTSSQQ) has biased composition (low complexity). Residues 1029–1038 (AVLESTQGVS) are compositionally biased toward polar residues. A compositionally biased stretch (low complexity) spans 1042–1058 (PPEQTPITQSQPTQPVP). Residues 1075-1085 (SDGNENAPSSS) are compositionally biased toward polar residues. A compositionally biased stretch (basic residues) spans 1093–1114 (TKRHYRKSVRSRSRHEKTSRPK). The RFXV motif 1 signature appears at 1252–1255 (RFIV). Ser-1256 bears the Phosphoserine mark. Disordered regions lie at residues 1726–1760 (GQVS…TVVP) and 1818–1847 (TMSS…SSGA). The span at 1738–1748 (PVGTATGVKPG) shows a compositional bias: low complexity. Thr-1843 is modified (phosphothreonine). The RFXV motif 2 signature appears at 1854–1857 (RFQV). The interval 1860-1945 (TMDDAQKERK…TKVGRFQVTT (86 aa)) is disordered. Residues 1863–1879 (DAQKERKNRSEDTKSVH) show a composition bias toward basic and acidic residues. Positions 1882-1900 (SSTSESSVLSSSSPESTLV) are enriched in low complexity. Short sequence motifs (RFXV motif) lie at residues 1940-1943 (RFQV) and 1952-1955 (RFSV). A compositionally biased stretch (basic and acidic residues) spans 1959 to 1969 (EDKVTELKKEG). Disordered regions lie at residues 1959–1984 (EDKV…QTVI), 1989–2008 (PKKE…PSSD), 2015–2064 (SRGT…DIED), 2107–2191 (VIIP…NLYS), and 2203–2239 (SLSA…SRKG). At Ser-1973 the chain carries Phosphoserine. Over residues 1989–1998 (PKKEKPELAE) the composition is skewed to basic and acidic residues. A phosphoserine mark is found at Ser-2006, Ser-2007, Ser-2022, Ser-2024, and Ser-2027. Residues 2035–2057 (SLPVQNLSQSLSNSFNSSYMSSD) show a composition bias toward low complexity. Ser-2116 is subject to Phosphoserine. Over residues 2117-2129 (GRRRRPTKSKGSK) the composition is skewed to basic residues. Residues 2130–2140 (SSRSSSLGNKS) are compositionally biased toward low complexity. The segment covering 2141–2191 (PQLSGNLSGQSGTSVLHPQQTLHPAGNTPETGHNQLLQPLKPSPSSDNLYS) has biased composition (polar residues). The segment covering 2208–2232 (GQGTSSTNTVGGTVSSQAAQAQPPA) has biased composition (low complexity). The amphipathic alpha-helix stretch occupies residues 2236 to 2256 (SRKGTFTDDLHKLVDNWARDA). 2 positions are modified to phosphoserine: Ser-2265 and Ser-2281. Residues 2325 to 2344 (PAPFGTQWSGTGGPAPQPLG) are disordered. Ser-2365 and Ser-2367 each carry phosphoserine.

It belongs to the protein kinase superfamily. Ser/Thr protein kinase family. WNK subfamily. In terms of assembly, interacts with WNK3. Interacts with WNK4; inhibiting the activity of WNK4. Interacts with SGK1; promoting its activation. Associates with the mTORC2 complex. Interacts with UVRAG. Interacts with isoform 1; inhibiting isoform 1 activity. Mg(2+) is required as a cofactor. In terms of processing, autophosphorylated at Ser-378 and Ser-382, promoting its activity. Autophosphorylation at Ser-382 is inhibited by intracellular calcium. Phosphorylation at Thr-58 increases ability to activate SGK1. Post-translationally, ubiquitinated by the BCR(KLHL3) complex, leading to its degradation. Also ubiquitinated by the BCR(KLHL2) complex. May be O-glycosylated. Widely expressed in both adult and embryonic tissue, with highest levels observed in the testis and lower levels in heart, lung, kidney, placenta, brain and skeletal muscle. Expressed in pancreatic duct. Two isoforms are expressed in heart, a single shorter isoform in the kidney. Locates to the distal convoluted tubule, the medullary collecting duct and the cortical collecting duct of the kidney. As to expression, restricted to the nervous system, expressed preferentially in sensory neurons than in motor neurons and in general more abundant in axons than in cell bodies (at protein level). In the DRG, predominantly expressed in the satellite cells that envelop sensory neurons, but low expression also observed in the cell bodies of neurons (at protein level). In the sciatic nerve, expressed in the Schwann cells that surround axons and in a mosaic distribution of axons (at protein level). In the spinal cord, expressed in superficial layers (LI and LII), as well as in the fibers of the Lissauer tract (at protein level). Also detected in the axon fibers of dorsolateral funiculus and lateral funiculus (at protein level).

It localises to the cytoplasm. The protein resides in the nucleus. The protein localises to the cytoskeleton. Its subcellular location is the spindle. The enzyme catalyses L-seryl-[protein] + ATP = O-phospho-L-seryl-[protein] + ADP + H(+). It catalyses the reaction L-threonyl-[protein] + ATP = O-phospho-L-threonyl-[protein] + ADP + H(+). Activated in response to hyperosmotic stress: cell shrinkage promotes formation of a membraneless compartment that concentrates WNK1 with its substrates, OXSR1/OSR1 and STK39/SPAK. Activation requires autophosphorylation of Ser-382 and, to a lower extent, Ser-378. Autophosphorylation and subsequent activation is inhibited by increases in intracellular ionic strength: Cl(-) potently inhibits WNK1 kinase activity via direct binding. Also inhibited by K(+) ions. Its function is as follows. Serine/threonine-protein kinase component of the WNK1-SPAK/OSR1 kinase cascade, which acts as a key regulator of blood pressure and regulatory volume increase by promoting ion influx. WNK1 mediates regulatory volume increase in response to hyperosmotic stress by acting as a molecular crowding sensor, which senses cell shrinkage and mediates formation of a membraneless compartment by undergoing liquid-liquid phase separation. The membraneless compartment concentrates WNK1 with its substrates, OXSR1/OSR1 and STK39/SPAK, promoting WNK1-dependent phosphorylation and activation of downstream kinases OXSR1/OSR1 and STK39/SPAK. Following activation, OXSR1/OSR1 and STK39/SPAK catalyze phosphorylation of ion cotransporters SLC12A1/NKCC2, SLC12A2/NKCC1, SLC12A5/KCC2 and SLC12A6/KCC3, regulating their activity. Phosphorylation of Na-K-Cl cotransporters SLC12A2/NKCC1 and SLC12A2/NKCC1 promote their activation and ion influx; simultaneously, phosphorylation of K-Cl cotransporters SLC12A5/KCC2 and SLC12A6/KCC3 inhibit their activity, blocking ion efflux. Also acts as a regulator of angiogenesis in endothelial cells. Also acts independently of the WNK1-SPAK/OSR1 kinase cascade by catalyzing phosphorylation of other substrates, such as SYT2, PCF11 and NEDD4L. Mediates phosphorylation of SYT2, regulating SYT2 association with phospholipids and membrane-binding. Regulates mRNA export in the nucleus by mediating phosphorylation of PCF11, thereby decreasing the association between PCF11 and POLR2A/RNA polymerase II and promoting mRNA export to the cytoplasm. Acts as a negative regulator of autophagy. Required for the abscission step during mitosis, independently of the WNK1-SPAK/OSR1 kinase cascade. WNK1 may also play a role in actin cytoskeletal reorganization. Also acts as a scaffold protein independently of its protein kinase activity: negatively regulates cell membrane localization of various transporters and channels, such as SLC4A4, SLC26A6, SLC26A9, TRPV4 and CFTR. Involved in the regulation of epithelial Na(+) channel (ENaC) by promoting activation of SGK1 in a kinase-independent manner: probably acts as a scaffold protein that promotes the recruitment of SGK1 to the mTORC2 complex in response to chloride, leading to mTORC2-dependent phosphorylation and activation of SGK1. Acts as an assembly factor for the ER membrane protein complex independently of its protein kinase activity: associates with EMC2 in the cytoplasm via its amphipathic alpha-helix, and prevents EMC2 ubiquitination and subsequent degradation, thereby promoting EMC2 stabilization. Functionally, kinase-defective isoform specifically expressed in kidney, which acts as a dominant-negative regulator of the longer isoform 1. Does not directly inhibit WNK4 and has no direct effect on sodium and chloride ion transport. Down-regulates sodium-chloride cotransporter activity indirectly by inhibiting isoform 1, it associates with isoform 1 and attenuates its kinase activity. In kidney, may play an important role regulating sodium and potassium balance. This Mus musculus (Mouse) protein is Serine/threonine-protein kinase WNK1.